Consider the following 77-residue polypeptide: U10-lycotoxin-Ls1a (77 aa).

A signal peptide spans 1 to 20 (MKLIIFTGLVLFAIVSLIEA). Positions 21-26 (EEESGR) are excised as a propeptide.

Belongs to the neurotoxin 19 (CSTX) family. 09 (U10-Lctx) subfamily. Contains 4 disulfide bonds. As to expression, expressed by the venom gland.

Its subcellular location is the secreted. In Lycosa singoriensis (Wolf spider), this protein is U10-lycotoxin-Ls1a.